A 514-amino-acid polypeptide reads, in one-letter code: Na(+)/H(+) antiporter NhaB (514 aa).

11 helical membrane-spanning segments follow: residues 21-41 (LAIV…SPFI), 43-63 (GWLL…CYPL), 88-108 (IMAN…IFFM), 143-163 (FLDA…FYGV), 203-223 (LMMH…VGEP), 239-259 (FFLR…LTCF), 304-324 (ALIA…VGLI), 349-369 (QESL…AVII), 390-410 (LALF…VFVA), 448-468 (ATPN…SPLI), and 484-504 (IVLS…ATIW).

Belongs to the NhaB Na(+)/H(+) (TC 2.A.34) antiporter family.

The protein resides in the cell inner membrane. The catalysed reaction is 2 Na(+)(in) + 3 H(+)(out) = 2 Na(+)(out) + 3 H(+)(in). In terms of biological role, na(+)/H(+) antiporter that extrudes sodium in exchange for external protons. The polypeptide is Na(+)/H(+) antiporter NhaB (Haemophilus influenzae (strain ATCC 51907 / DSM 11121 / KW20 / Rd)).